A 514-amino-acid chain; its full sequence is MAQTLQMEIPNFGNSILECLNEQRLQGLYCDVSVVVKGHAFKAHRAVLAASSSYFRDLFNSSRSAVVELPAAVQPQSFQQILTFCYTGRLSMNMGDQFLLIYTAGFLQIQEIMEKGTEFFLKVSSPSCDSQGLHPEEAPSSEPQSPVAQTLGWPACSTPLPLVSRVKTEQELDSVQCTPMAKRLWDSSQKEAGGSGGNNGSRKMAKFSTPDLALNRMPQPLSMATATAAVAVVAVGGCVSGPSMSERTSPGTSSAYTSDSPSSYHNEEDEEEDAGEEGTDEQYRQICNMYTMYSMLNVGQTAEKVEALPEQVVLESRSRIRVRQDLASLPAELINQIGNRCHPKLYDEGDPSEKLELVTGTNVYITRAQLMNCHVSAGTRHKVLLRRLLASFFDRNTLANSCGTGIRSSTNDPRRKPLDSRVLHAVKYYCQNFAPNFKESEMNAIAADMCTNARRVVRKSWLPKTKPLHLVEGDNYSSFISDTCKIEPDMMSMEHSFETASHDGEAGPSAEVLQ.

Residues 30–94 enclose the BTB domain; that stretch reads CDVSVVVKGH…CYTGRLSMNM (65 aa). Lys167 is covalently cross-linked (Glycyl lysine isopeptide (Lys-Gly) (interchain with G-Cter in SUMO1); alternate). Lys167 is covalently cross-linked (Glycyl lysine isopeptide (Lys-Gly) (interchain with G-Cter in SUMO2); alternate). Lys182 participates in a covalent cross-link: Glycyl lysine isopeptide (Lys-Gly) (interchain with G-Cter in SUMO2). Disordered regions lie at residues 183–205 and 242–279; these read RLWD…RKMA and PSMS…EEGT. Position 187 is a phosphoserine (Ser187). Residues 242–251 are compositionally biased toward polar residues; that stretch reads PSMSERTSPG. Position 245 is a phosphoserine; by PKC (Ser245). Residues 252–264 are compositionally biased toward low complexity; the sequence is TSSAYTSDSPSSY. Over residues 267 to 279 the composition is skewed to acidic residues; sequence EEDEEEDAGEEGT. Glycyl lysine isopeptide (Lys-Gly) (interchain with G-Cter in SUMO2) cross-links involve residues Lys304, Lys438, Lys466, and Lys485. In terms of domain architecture, BEN spans 360 to 457; that stretch reads GTNVYITRAQ…DMCTNARRVV (98 aa). A phosphoserine mark is found at Ser492 and Ser496.

As to quaternary structure, homooligomer; mediated by the BTB domain. Interacts with HDAC3 and HDAC4. Interacts (via BTB domain) with CUL3, PSMD7 and RCOR1. As to expression, ubiquitously expressed with higher expression in the brain, kidney and liver, and at lower levels in heart, lung and testes.

Its subcellular location is the nucleus. It localises to the cytoplasm. Functionally, functions as a transcriptional repressor. Seems to function as a transcriptional corepressor in neuronal cells through recruitment of HDAC3 and HDAC4. Contributes to tumor progression, and tumor cell proliferation and survival. This may be mediated at least in part through repressing transcriptional activity of GADD45GIP1. Required for recruiting the proteasome from the nucleus to the cytoplasm and dendritic spines. Involved in the acute behavioral and neurological responses to cocaine and amphetamines. In Mus musculus (Mouse), this protein is Nucleus accumbens-associated protein 1 (Nacc1).